The primary structure comprises 205 residues: Ribosomal RNA small subunit methyltransferase G (205 aa).

S-adenosyl-L-methionine is bound by residues G76, L81, 127–128 (IE), and R140.

This sequence belongs to the methyltransferase superfamily. RNA methyltransferase RsmG family.

Its subcellular location is the cytoplasm. The enzyme catalyses guanosine(527) in 16S rRNA + S-adenosyl-L-methionine = N(7)-methylguanosine(527) in 16S rRNA + S-adenosyl-L-homocysteine. In terms of biological role, specifically methylates the N7 position of guanine in position 527 of 16S rRNA. In Francisella tularensis subsp. tularensis (strain FSC 198), this protein is Ribosomal RNA small subunit methyltransferase G.